Consider the following 154-residue polypeptide: NAD(P)H-quinone oxidoreductase subunit N (154 aa).

It belongs to the complex I NdhN subunit family. In terms of assembly, NDH-1 can be composed of about 15 different subunits; different subcomplexes with different compositions have been identified which probably have different functions.

It localises to the cellular thylakoid membrane. The catalysed reaction is a plastoquinone + NADH + (n+1) H(+)(in) = a plastoquinol + NAD(+) + n H(+)(out). It carries out the reaction a plastoquinone + NADPH + (n+1) H(+)(in) = a plastoquinol + NADP(+) + n H(+)(out). Functionally, NDH-1 shuttles electrons from an unknown electron donor, via FMN and iron-sulfur (Fe-S) centers, to quinones in the respiratory and/or the photosynthetic chain. The immediate electron acceptor for the enzyme in this species is believed to be plastoquinone. Couples the redox reaction to proton translocation, and thus conserves the redox energy in a proton gradient. Cyanobacterial NDH-1 also plays a role in inorganic carbon-concentration. The polypeptide is NAD(P)H-quinone oxidoreductase subunit N (Prochlorococcus marinus (strain NATL2A)).